Reading from the N-terminus, the 299-residue chain is ATP phosphoribosyltransferase (299 aa).

Belongs to the ATP phosphoribosyltransferase family. Long subfamily. Requires Mg(2+) as cofactor.

It is found in the cytoplasm. The catalysed reaction is 1-(5-phospho-beta-D-ribosyl)-ATP + diphosphate = 5-phospho-alpha-D-ribose 1-diphosphate + ATP. It functions in the pathway amino-acid biosynthesis; L-histidine biosynthesis; L-histidine from 5-phospho-alpha-D-ribose 1-diphosphate: step 1/9. With respect to regulation, feedback inhibited by histidine. Catalyzes the condensation of ATP and 5-phosphoribose 1-diphosphate to form N'-(5'-phosphoribosyl)-ATP (PR-ATP). Has a crucial role in the pathway because the rate of histidine biosynthesis seems to be controlled primarily by regulation of HisG enzymatic activity. This Shewanella denitrificans (strain OS217 / ATCC BAA-1090 / DSM 15013) protein is ATP phosphoribosyltransferase.